Consider the following 340-residue polypeptide: 4-hydroxy-3-methylbut-2-enyl diphosphate reductase (340 aa).

Cysteine 19 is a [4Fe-4S] cluster binding site. Histidine 50 and histidine 90 together coordinate (2E)-4-hydroxy-3-methylbut-2-enyl diphosphate. Dimethylallyl diphosphate is bound by residues histidine 50 and histidine 90. The isopentenyl diphosphate site is built by histidine 50 and histidine 90. Residue cysteine 112 coordinates [4Fe-4S] cluster. Residue histidine 141 coordinates (2E)-4-hydroxy-3-methylbut-2-enyl diphosphate. Histidine 141 serves as a coordination point for dimethylallyl diphosphate. Histidine 141 is a binding site for isopentenyl diphosphate. Glutamate 143 acts as the Proton donor in catalysis. Threonine 190 contributes to the (2E)-4-hydroxy-3-methylbut-2-enyl diphosphate binding site. Cysteine 220 serves as a coordination point for [4Fe-4S] cluster. (2E)-4-hydroxy-3-methylbut-2-enyl diphosphate is bound by residues serine 248, serine 249, asparagine 250, and serine 292. Residues serine 248, serine 249, asparagine 250, and serine 292 each coordinate dimethylallyl diphosphate. Isopentenyl diphosphate-binding residues include serine 248, serine 249, asparagine 250, and serine 292.

The protein belongs to the IspH family. [4Fe-4S] cluster serves as cofactor.

It carries out the reaction isopentenyl diphosphate + 2 oxidized [2Fe-2S]-[ferredoxin] + H2O = (2E)-4-hydroxy-3-methylbut-2-enyl diphosphate + 2 reduced [2Fe-2S]-[ferredoxin] + 2 H(+). It catalyses the reaction dimethylallyl diphosphate + 2 oxidized [2Fe-2S]-[ferredoxin] + H2O = (2E)-4-hydroxy-3-methylbut-2-enyl diphosphate + 2 reduced [2Fe-2S]-[ferredoxin] + 2 H(+). The protein operates within isoprenoid biosynthesis; dimethylallyl diphosphate biosynthesis; dimethylallyl diphosphate from (2E)-4-hydroxy-3-methylbutenyl diphosphate: step 1/1. It participates in isoprenoid biosynthesis; isopentenyl diphosphate biosynthesis via DXP pathway; isopentenyl diphosphate from 1-deoxy-D-xylulose 5-phosphate: step 6/6. Its function is as follows. Catalyzes the conversion of 1-hydroxy-2-methyl-2-(E)-butenyl 4-diphosphate (HMBPP) into a mixture of isopentenyl diphosphate (IPP) and dimethylallyl diphosphate (DMAPP). Acts in the terminal step of the DOXP/MEP pathway for isoprenoid precursor biosynthesis. The polypeptide is 4-hydroxy-3-methylbut-2-enyl diphosphate reductase (Thermus thermophilus (strain ATCC BAA-163 / DSM 7039 / HB27)).